The following is a 265-amino-acid chain: MNERSAPIGVMDSGVGGLSVLAEIQRLLPNETLLYVADSGHVPYGEKSPDYIRQRLRHIAGFLREQGAKAMVLACNTATVATVADLRALYPDWPLVGMEPAVKPAAAATRSGVVGVLATTGTLQSAKFAALLDRFASDVRVITQPCPGLVECIEAGDLTSPALRQLLAGYVQPLLAQGCDTLILGCTHYPFLRPMLADMVPADVAIIDTGAAVARQLQRLLGERDLLADGPARETAFWTSADPDSLKKILPMLWMQSDRVQSFPL.

Substrate-binding positions include 12-13 and 44-45; these read DS and YG. Residue Cys75 is the Proton donor/acceptor of the active site. 76 to 77 contacts substrate; the sequence is NT. Cys186 (proton donor/acceptor) is an active-site residue. 187–188 contacts substrate; that stretch reads TH.

The protein belongs to the aspartate/glutamate racemases family.

It catalyses the reaction L-glutamate = D-glutamate. The protein operates within cell wall biogenesis; peptidoglycan biosynthesis. Functionally, provides the (R)-glutamate required for cell wall biosynthesis. The polypeptide is Glutamate racemase (Pseudomonas entomophila (strain L48)).